Reading from the N-terminus, the 487-residue chain is Protein FAM221B (487 aa).

Polar residues-rich tracts occupy residues 1-13 (MEAN…PQDT) and 36-48 (HETP…SQKH). Disordered regions lie at residues 1–103 (MEAN…QSVT) and 132–289 (QLSP…VTSR). Low complexity predominate over residues 81 to 103 (PPVKSSSSGLLSLPPQLSPQSVT). 2 stretches are compositionally biased toward basic and acidic residues: residues 227 to 236 (ESEHFPKHSF) and 243 to 253 (AKEDESTKEGE). Position 248 is a phosphoserine (Ser248).

Belongs to the FAM221 family.

This is Protein FAM221B (Fam221b) from Mus musculus (Mouse).